The sequence spans 264 residues: Undecaprenyl-diphosphatase (264 aa).

The next 7 membrane-spanning stretches (helical) occupy residues 34 to 54 (LLNL…MGSI), 75 to 95 (LLYL…LYII), 104 to 124 (YDPS…GLYI), 137 to 157 (LSLK…LPGV), 180 to 200 (YSYL…ILFS), 207 to 227 (VISL…FIIG), and 243 to 263 (IYII…LTIL).

It belongs to the UppP family.

The protein resides in the cell membrane. It catalyses the reaction di-trans,octa-cis-undecaprenyl diphosphate + H2O = di-trans,octa-cis-undecaprenyl phosphate + phosphate + H(+). Functionally, catalyzes the dephosphorylation of undecaprenyl diphosphate (UPP). In Sulfurisphaera tokodaii (strain DSM 16993 / JCM 10545 / NBRC 100140 / 7) (Sulfolobus tokodaii), this protein is Undecaprenyl-diphosphatase.